We begin with the raw amino-acid sequence, 287 residues long: Large ribosomal subunit protein uL2 (287 aa).

The segment at 220–287 is disordered; the sequence is VRGSVMNPCD…SKRSRGGRDS (68 aa). Positions 271–287 are enriched in basic residues; it reads VRRRRRISKRSRGGRDS.

The protein belongs to the universal ribosomal protein uL2 family. In terms of assembly, part of the 50S ribosomal subunit. Forms a bridge to the 30S subunit in the 70S ribosome.

Functionally, one of the primary rRNA binding proteins. Required for association of the 30S and 50S subunits to form the 70S ribosome, for tRNA binding and peptide bond formation. It has been suggested to have peptidyltransferase activity; this is somewhat controversial. Makes several contacts with the 16S rRNA in the 70S ribosome. This chain is Large ribosomal subunit protein uL2, found in Prochlorococcus marinus (strain MIT 9515).